A 252-amino-acid chain; its full sequence is Carboxymethylenebutenolidase (252 aa).

A disordered region spans residues 1 to 28; the sequence is MCHNKSSAPPTPAHISIQQNRTPGTDPV. Active-site residues include Cys126, Asp183, and His214.

This sequence belongs to the dienelactone hydrolase family.

It catalyses the reaction 2-(5-oxo-2,5-dihydrofuran-2-ylidene)acetate + H2O = 4-oxohex-2-enedioate + H(+). The protein operates within aromatic compound metabolism; 3-chlorocatechol degradation. Ring cleavage of cyclic ester dienelactone to produce maleylacetate. The sequence is that of Carboxymethylenebutenolidase (clcD) from Rhodococcus opacus (Nocardia opaca).